Consider the following 415-residue polypeptide: Probable cytosolic iron-sulfur protein assembly protein 1 (415 aa).

One copy of the WD 1 repeat lies at 9–48 (AHDDKVWSLSSHPTLPLLATASTDKCSNIYRLSCSNASSS). A disordered region spans residues 45–70 (ASSSSSSSSPPSPPSPPSSSSPRRNF). Over residues 54–63 (PPSPPSPPSS) the composition is skewed to pro residues. WD repeat units follow at residues 79 to 131 (THRR…DDNT), 160 to 200 (GHEN…EEFE), 207 to 246 (DHTQ…DEWS), 253 to 300 (GHEG…GFNG), 335 to 374 (IHTH…WEVE), and 380 to 415 (AHGV…IWEV).

It belongs to the WD repeat CIA1 family. In terms of assembly, interacts with NAR1.

The protein resides in the cytoplasm. The protein localises to the nucleus. Essential component of the cytosolic iron-sulfur (Fe/S) protein assembly machinery. Required for the maturation of extramitochondrial Fe/S proteins. The protein is Probable cytosolic iron-sulfur protein assembly protein 1 of Lodderomyces elongisporus (strain ATCC 11503 / CBS 2605 / JCM 1781 / NBRC 1676 / NRRL YB-4239) (Yeast).